The following is a 113-amino-acid chain: Class I hydrophobin POH1 (113 aa).

The signal sequence occupies residues 1 to 26 (MFSIRISTVVLAASALLAVAIPMTNT). 4 cysteine pairs are disulfide-bonded: cysteine 31–cysteine 93, cysteine 38–cysteine 87, cysteine 39–cysteine 74, and cysteine 94–cysteine 107.

This sequence belongs to the fungal hydrophobin family. Self-assembles to form functional amyloid fibrils called rodlets. Self-assembly into fibrillar rodlets occurs spontaneously at hydrophobic:hydrophilic interfaces and the rodlets further associate laterally to form amphipathic monolayers. In terms of tissue distribution, expressed in the fruiting bodies but not in vegetative mycelium.

The protein localises to the secreted. It is found in the cell wall. Its function is as follows. Aerial growth, conidiation, and dispersal of filamentous fungi in the environment rely upon a capability of their secreting small amphipathic proteins called hydrophobins (HPBs) with low sequence identity. Class I can self-assemble into an outermost layer of rodlet bundles on aerial cell surfaces, conferring cellular hydrophobicity that supports fungal growth, development and dispersal; whereas Class II form highly ordered films at water-air interfaces through intermolecular interactions but contribute nothing to the rodlet structure. POH1 is a class I hydrophobin that is involved in the formation of mycelium knots and subsequent fruiting bodies. This is Class I hydrophobin POH1 from Pleurotus ostreatus (Oyster mushroom).